A 581-amino-acid chain; its full sequence is Arginine--tRNA ligase (581 aa).

Positions 126–136 (PNLAKEMHVGH) match the 'HIGH' region motif.

Belongs to the class-I aminoacyl-tRNA synthetase family. Monomer.

Its subcellular location is the cytoplasm. The enzyme catalyses tRNA(Arg) + L-arginine + ATP = L-arginyl-tRNA(Arg) + AMP + diphosphate. The protein is Arginine--tRNA ligase of Shewanella frigidimarina (strain NCIMB 400).